We begin with the raw amino-acid sequence, 269 residues long: Glutamate racemase (269 aa).

Residues 14-15 (DS) and 46-47 (YS) each bind substrate. Cysteine 78 (proton donor/acceptor) is an active-site residue. Residue 79-80 (NT) coordinates substrate. Cysteine 189 serves as the catalytic Proton donor/acceptor. Residue 190 to 191 (TH) coordinates substrate.

The protein belongs to the aspartate/glutamate racemases family.

It carries out the reaction L-glutamate = D-glutamate. Its pathway is cell wall biogenesis; peptidoglycan biosynthesis. Functionally, provides the (R)-glutamate required for cell wall biosynthesis. The polypeptide is Glutamate racemase (Haemophilus influenzae (strain 86-028NP)).